A 670-amino-acid polypeptide reads, in one-letter code: RxLR effector protein PSR2 (670 aa).

Positions 1–17 are cleaved as a signal peptide; the sequence is MRLQCVVLFAALTLVAA. The RxLR-dEER motif lies at 39–54; the sequence is RLLRPGNPAGKEDEER. N57 is a glycosylation site (N-linked (GlcNAc...) asparagine). Residues 79–126 form a WY1 repeat; sequence KLLKWADAKKPPETVFTRLRLDKTGTQLFDNTDFPVWAAYTRSVAQTD. The 7 X 93 AA tandem repeats stretch occupies residues 79–670; the sequence is KLLKWADAKK…YSAKFKVRWG (592 aa). One copy of the LWY2 repeat lies at 127 to 217; that stretch reads SEASAVMLKT…NYMKLSNKEN (91 aa). The LWY3 repeat unit spans residues 218 to 308; the sequence is PKAQTTLIAT…KYINYYNKEN (91 aa). The stretch at 309–399 is one LWY4 repeat; sequence PDEKTTVLAK…KYTENFNLNK (91 aa). An LWY5 repeat occupies 400-492; that stretch reads EINEQVTAIQ…KFLEKYNTAN (93 aa). Residues 493 to 583 form an LWY6 repeat; sequence PGKEQTMISG…KYLNAFNDKA (91 aa). The stretch at 584–670 is one LWY7 repeat; the sequence is PVKKALMIDT…YSAKFKVRWG (87 aa).

It belongs to the RxLR effector family. As to quaternary structure, interacts with host dsRNA-binding protein DRB4.

The protein localises to the secreted. The protein resides in the host cell. In terms of biological role, secreted effector that possesses RNA silencing suppression activity by inhibiting the biogenesis of small RNAs in the host plant to promote enhanced susceptibility of host to the pathogen during infection. Interferes with secondary siRNA production by associating with host dsRNA-binding protein DRB4. Inhibits the host salicylic acid pathway during infection. The protein is RxLR effector protein PSR2 of Phytophthora sojae (Soybean stem and root rot agent).